The chain runs to 211 residues: Ras-related protein rab-11.1 (211 aa).

18–26 is a binding site for GTP; it reads GDSGVGKSN. Residues 40-48 carry the Effector region motif; that stretch reads SKSTIGVEF. GTP is bound by residues 66-70, 124-127, and 154-156; these read DTAGQ, NKSD, and SAL. The interval 187-211 is disordered; sequence GYGGGSGTIIPSPASDPPKKQCCIP. S-geranylgeranyl cysteine attachment occurs at residues cysteine 208 and cysteine 209.

This sequence belongs to the small GTPase superfamily. Rab family. As to quaternary structure, interacts with rei-1 and rei-2. The GDP-form preferentially binds to rei-1 and rei-2. Expressed weakly in sperm, but more predominantly in oocytes. Expressed in the intestine.

The protein resides in the cytoplasmic vesicle. It is found in the secretory vesicle. Its subcellular location is the endosome. The protein localises to the cytoplasm. It localises to the cytoskeleton. The protein resides in the spindle. It is found in the microtubule organizing center. Its subcellular location is the spindle pole body. The protein localises to the centrosome. It localises to the apical cell membrane. The protein resides in the cytosol. It is found in the recycling endosome membrane. Its subcellular location is the golgi apparatus membrane. The protein localises to the cytoplasmic granule. The small GTPases Rab are key regulators of intracellular membrane trafficking, from the formation of transport vesicles to their fusion with membranes. Rabs cycle between an inactive GDP-bound form and an active GTP-bound form that is able to recruit to membranes different set of downstream effectors directly responsible for vesicle formation, movement, tethering and fusion. Involved in regulating the meiotic maturation of oocytes. Plays a role in egg shell formation, regulating exocytosis of chondroitin proteoglycans following fertilization. Controls cortical granule localization and targets them to the plasma membrane for exocytosis. Acts as a major regulator of membrane delivery during cytokinesis. Regulates the cytoskeleton by facilitating astral microtubule elongation and organization during metaphase to ensure proper spindle alignment and polarity in the first embryonic cell division. Maintains normal endoplasmic reticulum morphology during metaphase. Involved in vesicle formation and plasma membrane repair following exposure to pore forming toxins. Regulates endocytic recycling. May play a role in yolk receptor endocytosis in growing oocytes. Plays a role in the shedding of pathogen spores from intestinal cells via its involvement in spore fusion and endocytic trafficking. This Caenorhabditis elegans protein is Ras-related protein rab-11.1.